The chain runs to 849 residues: MTRETRFGALAADARWQKAWEAANSFATTDSGQKPKAYILEMFPYPSGRIHMGHVRNYAMGDVLARFKRMTGHDVLHPMGWDAFGMPAENAAMEKGVHPGGWTRANIDAMRAQLKRLGLAIDWSRELATCEPDYYGQEQALFLDLHAAGLVYRKESYVNWDPVDMTVLANEQVIDGRGWRSGALVEKKKLSQWFLKITDFADELLEGLGSLDKWPDKVRLMQENWIGKSQGLEFSFKFAGGAPAFAVFTTRPDTLYGASFAAISPDHPLAEKLAKDSPELAAFIAECRRQGTSAEQLETAEKLGFDTGLAVEHPLDPDWHLPVWVVNYVLMDYGTGAIFGCPAHDQRDLDFAHKYELPVHRVIADGDETAQHFTGSEAYTGPGKLVNSHFLDGMSIDEAKAAVITRAEHEGWGKGTTVWRLRDWGVSRQRYWGTPIPFIHCAACGTVPVPKSQLPVTLPDDVDFSVPGNPLDRHPTWKHVACPICEGAALRETDTLDTFVDSSWYFLRFASAPTDKPFDPEVIRRWLPVDQYIGGIEHAILHLLYARFWTRALNKLGMIDIEEPFASLFTQGMVTHETYSRPQGEGLPPLYFTPDEVERGADGATLIADGAPVEVGRVIKMSKSKKNVVDPDAILDQYGADAVRWFMLSDSPPERDLPWSEAGIEGAWRFVQRLWRLFGETENVGDGGEDKGLARKLHQTIAGVAADIEALGFNKAVAKIHALANEIEKAKPSATRAEACAKLILLVAPMMPHLAEEAWTALPASQRTTPMVADAAWPAADPALLIDDEVTIAIQMAGKLRDTMTVAKGADKAALEAAALARPRIVELLGGAAPKKVIVVPDRLVNILP.

The 'HIGH' region signature appears at 44–54 (PYPSGRIHMGH). Positions 620 to 624 (KMSKS) match the 'KMSKS' region motif. Lys-623 is a binding site for ATP.

The protein belongs to the class-I aminoacyl-tRNA synthetase family.

The protein localises to the cytoplasm. The enzyme catalyses tRNA(Leu) + L-leucine + ATP = L-leucyl-tRNA(Leu) + AMP + diphosphate. The polypeptide is Leucine--tRNA ligase (Sphingopyxis alaskensis (strain DSM 13593 / LMG 18877 / RB2256) (Sphingomonas alaskensis)).